Consider the following 287-residue polypeptide: Thioredoxin-related transmembrane protein 2 (287 aa).

A signal peptide spans Met1–Ala13. Residues Ala14–Met112 are Extracellular-facing. The helical transmembrane segment at Gly113–Leu133 threads the bilayer. Residues Gly134 to Gln287 lie on the Cytoplasmic side of the membrane. The region spanning His137–Ser209 is the Thioredoxin domain. The Di-lysine motif motif lies at Lys284 to Gln287.

Monomer. Homodimer; disulfide-linked. Occurs in both reduced and oxidized monomeric form. Oxidative conditions increase homodimerization.

It is found in the endoplasmic reticulum membrane. It localises to the mitochondrion membrane. Functionally, endoplasmic reticulum and mitochondria-associated protein that probably functions as a regulator of cellular redox state and thereby regulates protein post-translational modification, protein folding and mitochondrial activity. This chain is Thioredoxin-related transmembrane protein 2 (tmx2), found in Xenopus laevis (African clawed frog).